A 141-amino-acid chain; its full sequence is Large ribosomal subunit protein uL11 (141 aa).

The protein belongs to the universal ribosomal protein uL11 family. Part of the ribosomal stalk of the 50S ribosomal subunit. Interacts with L10 and the large rRNA to form the base of the stalk. L10 forms an elongated spine to which L12 dimers bind in a sequential fashion forming a multimeric L10(L12)X complex. Post-translationally, one or more lysine residues are methylated.

Functionally, forms part of the ribosomal stalk which helps the ribosome interact with GTP-bound translation factors. This Moorella thermoacetica (strain ATCC 39073 / JCM 9320) protein is Large ribosomal subunit protein uL11.